The primary structure comprises 250 residues: Small ribosomal subunit protein uS2 (250 aa).

This sequence belongs to the universal ribosomal protein uS2 family.

This chain is Small ribosomal subunit protein uS2, found in Albidiferax ferrireducens (strain ATCC BAA-621 / DSM 15236 / T118) (Rhodoferax ferrireducens).